The following is a 249-amino-acid chain: Elongation factor Ts (249 aa).

Residues 82-85 (TDFV) form an involved in Mg(2+) ion dislocation from EF-Tu region. Residues 215–249 (QAGQLAPEAESTTETADATSETTTEKSSAKKKKKK) form a disordered region. Positions 222–236 (EAESTTETADATSET) are enriched in low complexity.

It belongs to the EF-Ts family.

The protein localises to the cytoplasm. Its function is as follows. Associates with the EF-Tu.GDP complex and induces the exchange of GDP to GTP. It remains bound to the aminoacyl-tRNA.EF-Tu.GTP complex up to the GTP hydrolysis stage on the ribosome. The polypeptide is Elongation factor Ts (Rippkaea orientalis (strain PCC 8801 / RF-1) (Cyanothece sp. (strain PCC 8801))).